The primary structure comprises 258 residues: MKITKIEKKKRLYLIELDNDDSLYVTEDTIVRFMLSKDKVLDNDQLEDMKHFAQLSYGKNLALYFLSFQQRSNKQVADYLRKHEIEEHIIADIITQLQEEQWIDDTKLADTYIRQNQLNGDKGPQVLKQKLLQKGIASHDIDPILSQTDFTQLAQKVSQKLFDKYQEKLPPKALKDKITQALLTKGFSYDLAKHSLNHLNFDQDNQEIEDLLDKELDKQYRKLSRKYDGYTLKQRLYQALYRKGYNSDDINCKLRNYL.

This sequence belongs to the RecX family.

It is found in the cytoplasm. Modulates RecA activity. The protein is Regulatory protein RecX of Streptococcus pyogenes serotype M2 (strain MGAS10270).